The following is a 349-amino-acid chain: N-acetyltaurine hydrolase (349 aa).

Residues histidine 26, histidine 28, glutamate 169, histidine 201, histidine 230, and aspartate 298 each coordinate a divalent metal cation.

It belongs to the metallo-dependent hydrolases superfamily. Phosphotriesterase family. The cofactor is a divalent metal cation.

The protein localises to the cytoplasm. Its subcellular location is the cytosol. It catalyses the reaction N-acetyltaurine + H2O = taurine + acetate. It carries out the reaction N-propanoyltaurine + H2O = propanoate + taurine. The catalysed reaction is N-acetyl-L-methionine + H2O = L-methionine + acetate. The enzyme catalyses N-acetyl-L-isoleucine + H2O = L-isoleucine + acetate. It catalyses the reaction N-acetyl-L-leucine + H2O = L-leucine + acetate. It carries out the reaction N-acetyl-L-valine + H2O = L-valine + acetate. N-acetyltaurine hydrolase that regulates feeding by catalyzing the hydrolysis of N-acetyltaurine into taurine and acetate. N-acetyltaurine has anorexigenic and anti-obesity effects that are dependent on GFRAL receptor and GDF15. PTER also acts on other N-acetyl amino acids (Met, Ile, Leu, Val) and N-propionyltaurine, but at lower rates. The protein is N-acetyltaurine hydrolase of Homo sapiens (Human).